A 210-amino-acid polypeptide reads, in one-letter code: MTTLETLKWDGKKVGKVSIDLKVAKETSSSDLIHRAVLRQLANQRQGTASTLTRSEVRGGGRKPYKQKGTGRARQGSIRTPLRPGGGVIFGPKPRSYNLDMNRKERRLALRTALMSRVDDIKAVEDFGSTLNQPKTSEIINGLSRLGIEKTEKVLVILDSPSEVIKKSINNIAKVKLIAADQLNVFDILNANKLVIGQSAINKIQEVYAS.

Over residues 44-54 the composition is skewed to polar residues; sequence QRQGTASTLTR. The tract at residues 44–96 is disordered; that stretch reads QRQGTASTLTRSEVRGGGRKPYKQKGTGRARQGSIRTPLRPGGGVIFGPKPRS. Positions 60 to 71 are enriched in basic residues; it reads GGRKPYKQKGTG.

The protein belongs to the universal ribosomal protein uL4 family. As to quaternary structure, part of the 50S ribosomal subunit.

Functionally, one of the primary rRNA binding proteins, this protein initially binds near the 5'-end of the 23S rRNA. It is important during the early stages of 50S assembly. It makes multiple contacts with different domains of the 23S rRNA in the assembled 50S subunit and ribosome. Its function is as follows. Forms part of the polypeptide exit tunnel. The protein is Large ribosomal subunit protein uL4 of Prochlorococcus marinus (strain MIT 9515).